The primary structure comprises 236 residues: CDP-diacylglycerol--glycerol-3-phosphate 3-phosphatidyltransferase (236 aa).

The next 5 membrane-spanning stretches (helical) occupy residues 39–59, 66–86, 120–140, 163–183, and 196–216; these read IFIA…GVLA, ISIS…TAVI, VLIA…VFIV, WLGK…CFVW, and GLFF…FSIW.

The protein belongs to the CDP-alcohol phosphatidyltransferase class-I family.

Its subcellular location is the cell membrane. The catalysed reaction is a CDP-1,2-diacyl-sn-glycerol + sn-glycerol 3-phosphate = a 1,2-diacyl-sn-glycero-3-phospho-(1'-sn-glycero-3'-phosphate) + CMP + H(+). The protein operates within phospholipid metabolism; phosphatidylglycerol biosynthesis; phosphatidylglycerol from CDP-diacylglycerol: step 1/2. This protein catalyzes the committed step to the synthesis of the acidic phospholipids. The polypeptide is CDP-diacylglycerol--glycerol-3-phosphate 3-phosphatidyltransferase (pgsA) (Mycoplasma genitalium (strain ATCC 33530 / DSM 19775 / NCTC 10195 / G37) (Mycoplasmoides genitalium)).